The following is a 225-amino-acid chain: Transcription factor MYB1 (225 aa).

2 consecutive HTH myb-type domains span residues 11 to 67 (LGRV…KPSI) and 68 to 118 (KRGH…YKKH). DNA-binding regions (H-T-H motif) lie at residues 39-63 (WKRV…LNYL) and 91-114 (WSLI…NTHL).

As to quaternary structure, no interactions with bHLH.

Its subcellular location is the nucleus. Its function is as follows. Activates DODA1 and CYP76AD1 in the betalain red pigment pathway. In Beta vulgaris (Sugar beet), this protein is Transcription factor MYB1.